Consider the following 248-residue polypeptide: Putative imidazole glycerol phosphate synthase subunit hisF2 (248 aa).

D129 is a catalytic residue.

Belongs to the HisA/HisF family. As to quaternary structure, heterodimer of HisH and HisF.

Its subcellular location is the cytoplasm. It carries out the reaction 5-[(5-phospho-1-deoxy-D-ribulos-1-ylimino)methylamino]-1-(5-phospho-beta-D-ribosyl)imidazole-4-carboxamide + L-glutamine = D-erythro-1-(imidazol-4-yl)glycerol 3-phosphate + 5-amino-1-(5-phospho-beta-D-ribosyl)imidazole-4-carboxamide + L-glutamate + H(+). It functions in the pathway amino-acid biosynthesis; L-histidine biosynthesis; L-histidine from 5-phospho-alpha-D-ribose 1-diphosphate: step 5/9. Functionally, IGPS catalyzes the conversion of PRFAR and glutamine to IGP, AICAR and glutamate. The HisF subunit catalyzes the cyclization activity that produces IGP and AICAR from PRFAR using the ammonia provided by the HisH subunit. In Campylobacter jejuni subsp. jejuni serotype O:2 (strain ATCC 700819 / NCTC 11168), this protein is Putative imidazole glycerol phosphate synthase subunit hisF2 (hisF2).